A 517-amino-acid polypeptide reads, in one-letter code: PSTB2-interacting protein 1 (517 aa).

As to quaternary structure, interacts with PDR17/PSTB2 and SCS2.

Phosphatidic acid-binding protein involved in interorganelle phosphatidylserine (PtdSer) transport. Linkks a PtdSer donor membrane (via binding of SCS2 and phosphatidic acid present in the donor membrane) with an acceptor membrane (via its interaction with PDR17), forming a zone of apposition that facilitates PtdSer transfer. The sequence is that of PSTB2-interacting protein 1 from Saccharomyces cerevisiae (strain ATCC 204508 / S288c) (Baker's yeast).